Reading from the N-terminus, the 175-residue chain is MPTPADDLVVIGKIVSVYGIRGEVKVYSFTDPLDNLLDYRRWTLRRDGETRQAELVRGRLHGKVLAAKLKGLDDREEARTFTGYEICIPRSELPSLEEGEYYWYQLEGLKVIDQGGQLLGVIDHLLETGANDVMVVKPCAGSLDDRERLLPYTGQCVLSIDLAAGEMRVDWDADF.

Positions 98–175 (EGEYYWYQLE…EMRVDWDADF (78 aa)) constitute a PRC barrel domain.

The protein belongs to the RimM family. In terms of assembly, binds ribosomal protein uS19.

It is found in the cytoplasm. Functionally, an accessory protein needed during the final step in the assembly of 30S ribosomal subunit, possibly for assembly of the head region. Essential for efficient processing of 16S rRNA. May be needed both before and after RbfA during the maturation of 16S rRNA. It has affinity for free ribosomal 30S subunits but not for 70S ribosomes. The sequence is that of Ribosome maturation factor RimM from Pseudomonas paraeruginosa (strain DSM 24068 / PA7) (Pseudomonas aeruginosa (strain PA7)).